A 312-amino-acid chain; its full sequence is Elongation factor Ts (312 aa).

Residues 80-83 form an involved in Mg(2+) ion dislocation from EF-Tu region; that stretch reads TDFV.

The protein belongs to the EF-Ts family.

It is found in the cytoplasm. Associates with the EF-Tu.GDP complex and induces the exchange of GDP to GTP. It remains bound to the aminoacyl-tRNA.EF-Tu.GTP complex up to the GTP hydrolysis stage on the ribosome. The sequence is that of Elongation factor Ts from Paramagnetospirillum magneticum (strain ATCC 700264 / AMB-1) (Magnetospirillum magneticum).